The chain runs to 274 residues: Beta-lysine N(6)-acetyltransferase (274 aa).

One can recognise an N-acetyltransferase domain in the interval 123 to 274 (FHLKIANETD…DMNFWYKLSE (152 aa)).

Belongs to the acetyltransferase family.

The enzyme catalyses (3S)-3,6-diaminohexanoate + acetyl-CoA = (3S)-6-acetamido-3-aminohexanoate + CoA + H(+). Catalyzes the acetylation of beta-lysine to N6-acetyl-beta-lysine, a compatible solute produced by methanogenic archaea that helps cells to cope with salt stress. This is Beta-lysine N(6)-acetyltransferase from Methanococcus maripaludis (strain DSM 14266 / JCM 13030 / NBRC 101832 / S2 / LL).